The sequence spans 572 residues: Proline--tRNA ligase (572 aa).

It belongs to the class-II aminoacyl-tRNA synthetase family. ProS type 1 subfamily. As to quaternary structure, homodimer.

The protein localises to the cytoplasm. The enzyme catalyses tRNA(Pro) + L-proline + ATP = L-prolyl-tRNA(Pro) + AMP + diphosphate. Functionally, catalyzes the attachment of proline to tRNA(Pro) in a two-step reaction: proline is first activated by ATP to form Pro-AMP and then transferred to the acceptor end of tRNA(Pro). As ProRS can inadvertently accommodate and process non-cognate amino acids such as alanine and cysteine, to avoid such errors it has two additional distinct editing activities against alanine. One activity is designated as 'pretransfer' editing and involves the tRNA(Pro)-independent hydrolysis of activated Ala-AMP. The other activity is designated 'posttransfer' editing and involves deacylation of mischarged Ala-tRNA(Pro). The misacylated Cys-tRNA(Pro) is not edited by ProRS. This is Proline--tRNA ligase from Enterococcus faecalis (strain ATCC 700802 / V583).